A 270-amino-acid chain; its full sequence is L-fucose dehydrogenase (270 aa).

NAD(+) contacts are provided by Arg-19, Ile-21, Asp-40, Lys-41, Asp-62, Val-63, Asn-89, Tyr-154, Lys-158, Ile-187, Thr-189, and Leu-191.

This sequence belongs to the short-chain dehydrogenases/reductases (SDR) family.

It carries out the reaction L-fucose + NAD(+) = L-fucono-1,5-lactone + NADH + H(+). The enzyme catalyses D-arabinose + NAD(+) = D-arabinono-1,5-lactone + NADH + H(+). The catalysed reaction is L-galactose + NAD(+) = L-galactono-1,5-lactone + NADH + H(+). Its function is as follows. Catalyzes the NAD(+)-dependent oxidation of L-fucose, yielding L-fucono-1,5-lactone, which rapidly converts spontaneously to L-fucone-1,4-lactone. Does not use NADPH. Displays low activity on L-fucose, D-arabinose and L-galactose compared with rabbit and human. This is consitent with the low L-fucose metabolism observed in this species. The protein is L-fucose dehydrogenase (Hsd17b14) of Rattus norvegicus (Rat).